The following is a 492-amino-acid chain: N-succinylglutamate 5-semialdehyde dehydrogenase (492 aa).

220–225 (GSANTG) contacts NAD(+). Active-site residues include glutamate 243 and cysteine 277.

This sequence belongs to the aldehyde dehydrogenase family. AstD subfamily.

It carries out the reaction N-succinyl-L-glutamate 5-semialdehyde + NAD(+) + H2O = N-succinyl-L-glutamate + NADH + 2 H(+). It functions in the pathway amino-acid degradation; L-arginine degradation via AST pathway; L-glutamate and succinate from L-arginine: step 4/5. In terms of biological role, catalyzes the NAD-dependent reduction of succinylglutamate semialdehyde into succinylglutamate. This Escherichia coli (strain SE11) protein is N-succinylglutamate 5-semialdehyde dehydrogenase.